The chain runs to 473 residues: ATP synthase subunit beta (473 aa).

158–165 (GGAGVGKT) contacts ATP.

This sequence belongs to the ATPase alpha/beta chains family. F-type ATPases have 2 components, CF(1) - the catalytic core - and CF(0) - the membrane proton channel. CF(1) has five subunits: alpha(3), beta(3), gamma(1), delta(1), epsilon(1). CF(0) has three main subunits: a(1), b(2) and c(9-12). The alpha and beta chains form an alternating ring which encloses part of the gamma chain. CF(1) is attached to CF(0) by a central stalk formed by the gamma and epsilon chains, while a peripheral stalk is formed by the delta and b chains. The F(1)F(0) complex interacts with SpoIIIJ and YqjG; YqgA is found in the same complex.

The protein resides in the cell membrane. It localises to the membrane raft. The catalysed reaction is ATP + H2O + 4 H(+)(in) = ADP + phosphate + 5 H(+)(out). In terms of biological role, produces ATP from ADP in the presence of a proton gradient across the membrane. The catalytic sites are hosted primarily by the beta subunits. This is ATP synthase subunit beta from Bacillus subtilis (strain 168).